A 441-amino-acid polypeptide reads, in one-letter code: Lysine histidine transporter-like 2 (441 aa).

At 1–32 (MEKSQSSPTKDASTKQKNVDDWLPITSSRNAK) the chain is on the cytoplasmic side. A helical membrane pass occupies residues 33 to 53 (WWYSAFHNVTAMVGAGVLSLP). Residues 54-58 (YAMSN) lie on the Extracellular side of the membrane. The chain crosses the membrane as a helical span at residues 59 to 79 (LGWGPGVTIMIMSWLITFYTL). Residues 80–110 (WQMVQMHEMVPGKRFDRYHELGQHAFGEKLG) lie on the Cytoplasmic side of the membrane. Residues 111–131 (LWIVVPQQLIVEVGVDIVYMV) traverse the membrane as a helical segment. The Extracellular portion of the chain corresponds to 132 to 155 (TGGKSLKKIHDLLCTDCKNIRTTY). 2 consecutive transmembrane segments (helical) span residues 156–176 (WIMIFASIHFVLAHLPNFNSI) and 177–197 (SIVSLAAAVMSLSYSTIAWAT). The Extracellular portion of the chain corresponds to 198 to 222 (SVKKGVHPNVDYSSRASTTSGNVFN). A helical transmembrane segment spans residues 223-243 (FLNALGDVAFAYAGHNVVLEI). The Cytoplasmic portion of the chain corresponds to 244 to 264 (QATIPSTPEKPSKIAMWKGVV). The helical transmembrane segment at 265–285 (VAYIVVAICYFPVAFVCYYIF) threads the bilayer. Residues 286-300 (GNSVDDNILMTLEKP) lie on the Extracellular side of the membrane. A helical membrane pass occupies residues 301–321 (IWLIAIANAFVVVHVIGSYQI). At 322-347 (YAMPVFDMLETFLVKKMMFAPSFKLR) the chain is on the cytoplasmic side. Residues 348–370 (FITRTLYVAFTMFVAICIPFFGG) form a helical membrane-spanning segment. The Extracellular portion of the chain corresponds to 371-373 (LLG). Residues 374 to 396 (FFGGFAFAPTTYYLPCIMWLCIK) traverse the membrane as a helical segment. Over 397–406 (KPKKYGLSWC) the chain is Cytoplasmic. The helical transmembrane segment at 407–427 (INWFCIVVGVILTILAPIGGL) threads the bilayer. The Extracellular portion of the chain corresponds to 428–441 (RTIIISAKNYEFFS).

This sequence belongs to the amino acid/polyamine transporter 2 family. Amino acid/auxin permease (AAAP) (TC 2.A.18.2) subfamily.

It is found in the cell membrane. Functionally, amino acid transporter. The protein is Lysine histidine transporter-like 2 of Arabidopsis thaliana (Mouse-ear cress).